A 608-amino-acid polypeptide reads, in one-letter code: Kelch-like protein 10 (608 aa).

Residues cysteine 39–proline 106 enclose the BTB domain. Kelch repeat units follow at residues isoleucine 292–glycine 339, tyrosine 340–asparagine 386, isoleucine 388–glycine 433, lysine 434–glutamate 480, histidine 481–aspartate 527, and leucine 529–glycine 574. Residue serine 501 is modified to Phosphoserine.

In terms of assembly, self-associates. Interacts with CUL3; indicative for the participation in an E3 ubiquitin ligase complex.

The protein localises to the cytoplasm. It functions in the pathway protein modification; protein ubiquitination. Its function is as follows. May be a substrate-specific adapter of a CUL3-based E3 ubiquitin-protein ligase complex which mediates the ubiquitination and subsequent proteasomal degradation of target proteins during spermatogenesis. The sequence is that of Kelch-like protein 10 (Klhl10) from Rattus norvegicus (Rat).